The sequence spans 94 residues: FXYD domain-containing ion transport regulator 6 (94 aa).

The N-terminal stretch at 1 to 17 is a signal peptide; sequence METVLILCSLLAPVVLA. Over 18–34 the chain is Extracellular; the sequence is SAAEKEKEKDPFYYDYQ. A helical membrane pass occupies residues 35-57; sequence TLRIGGLVFAVVLFSVGILLILS. The Cytoplasmic portion of the chain corresponds to 58–94; sequence RRCKCSFNQKPRAPGDEEAQVENLITTNAAEPQKAEN.

It belongs to the FXYD family. In terms of assembly, regulatory subunit of the sodium/potassium-transporting ATPase which is composed of a catalytic alpha subunit, a non-catalytic beta subunit and an additional regulatory subunit. The regulatory subunit, a member of the FXYD protein family, modulates the enzymatic activity in a tissue- and isoform-specific way by changing affinities of the Na+/K+-ATPase toward Na(+), K(+) or ATP. In terms of tissue distribution, expressed in the neuronal fibers of the medial part of lateral habenula nucleus, thalamus, hypothalamus, stria terminalis, zona incerta, amygdaloid body and cingulum, olfactory bulb, hippocampus, cerebral cortex and cerebellum. In the cerebellum there is a predominant expression pattern in the granule layer of lobules VI-IX of the posterior lobe. Detected in inner ear.

It localises to the cell membrane. Associates with and regulates the activity of the sodium/potassium-transporting ATPase (NKA) which catalyzes the hydrolysis of ATP coupled with the exchange of Na(+) and K(+) ions across the plasma membrane. Decreases the apparent affinity of the transporter for Na(+). In addition to modulating NKA kinetics, may also function as a regulator of NKA localization to the plasma membrane. This Rattus norvegicus (Rat) protein is FXYD domain-containing ion transport regulator 6 (Fxyd6).